The chain runs to 516 residues: GTPase Obg (516 aa).

Residues 4–161 (PTFVDRVTLH…LEIVLELKVV (158 aa)) form the Obg domain. The 171-residue stretch at 162-332 (ADIGLVGFPS…LTFAMAGIVE (171 aa)) folds into the OBG-type G domain. Residues 168–175 (GFPSAGKS), 193–197 (FTTLV), 214–217 (DVPG), 284–287 (NKVD), and 313–315 (SAA) each bind GTP. Ser-175 and Thr-195 together coordinate Mg(2+). Positions 351–432 (PSVDGSDAFT…ENAVVFDFKP (82 aa)) constitute an OCT domain. The span at 466–491 (AMADRAEGETRADVARRLDRPAREDG) shows a compositional bias: basic and acidic residues. The disordered stretch occupies residues 466-516 (AMADRAEGETRADVARRLDRPAREDGGAYGPQSYEIGGRDDPDWAEEDLGE).

The protein belongs to the TRAFAC class OBG-HflX-like GTPase superfamily. OBG GTPase family. As to quaternary structure, monomer. Mg(2+) is required as a cofactor.

The protein resides in the cytoplasm. Its function is as follows. An essential GTPase which binds GTP, GDP and possibly (p)ppGpp with moderate affinity, with high nucleotide exchange rates and a fairly low GTP hydrolysis rate. Plays a role in control of the cell cycle, stress response, ribosome biogenesis and in those bacteria that undergo differentiation, in morphogenesis control. This chain is GTPase Obg, found in Nocardioides sp. (strain ATCC BAA-499 / JS614).